A 959-amino-acid chain; its full sequence is DEAD-box ATP-dependent RNA helicase rde-12 (959 aa).

The segment at 1–336 (MSSFGNNAGG…EGVNAPVRAP (336 aa)) is disordered. Positions 71–97 (GRREDDRSHSRDNHGGSRYGERDDRGN) are enriched in basic and acidic residues. Polar residues predominate over residues 98-118 (NGRSADNRYSQSNYNYDSNRG). The span at 122–134 (YQRDNHGSKDDRG) shows a compositional bias: basic and acidic residues. The segment covering 137–160 (NQYNDHGSNHNSNSRNDQYRQGSY) has biased composition (polar residues). Basic and acidic residues-rich tracts occupy residues 166-181 (SGYR…DNDQ) and 189-201 (RDSD…DHHN). Positions 202 to 213 (YNSQSSPRSHQG) are enriched in polar residues. Basic and acidic residues-rich tracts occupy residues 219–239 (SAPK…HDSY) and 255–270 (YRND…DHRS). A compositionally biased stretch (low complexity) spans 271–280 (GGNNSSSGFK). Residues 281-301 (NDGGFGGNDNRGFGNNGGGSF) show a composition bias toward gly residues. Positions 302–317 (GNPNNSYRGNSNNIGG) are enriched in low complexity. Residues 380-408 (TSWTNSGLHPTILETLKRIKYNNVRTIQG) carry the Q motif motif. A Helicase ATP-binding domain is found at 411–599 (IPQVLDGHDV…NELMKRLPGQ (189 aa)). 424-431 (AETSAGKT) lines the ATP pocket. Residues 539 to 542 (DEAD) carry the DEAD box motif. Positions 632–792 (KLREILKQNV…KVPDFLDAMA (161 aa)) constitute a Helicase C-terminal domain. 2 disordered regions span residues 793–834 (KSSR…GGGR) and 858–959 (GGGG…DDEW). 2 stretches are compositionally biased toward gly residues: residues 800-834 (GTSG…GGGR) and 858-872 (GGGG…GFGG). Over residues 930–941 (TLGSSTFGTANN) the composition is skewed to polar residues. The segment covering 942 to 959 (ADEEPTETGADGNDDDEW) has biased composition (acidic residues).

Belongs to the DEAD box helicase family. DDX3/DED1 subfamily. Interacts with wago-1, ergo-1 and rde-1. The cofactor is Mg(2+). As to expression, expressed in the soma and germline.

It is found in the cytoplasm. The protein resides in the perinuclear region. Its subcellular location is the cytoplasmic granule. The protein localises to the P-body. The enzyme catalyses ATP + H2O = ADP + phosphate + H(+). Functionally, probable ATP-dependent RNA helicase involved in RNAi-mediated gene silencing. Specifically required in the endogenous siRNA pathway for biogenesis of secondary endogenous small interfering RNA (siRNA) intermediates called 22G-RNAs. May associate with and recruit rde-10 to primary siRNA-targeted mRNA for secondary siRNA synthesis. May be recruited to target mRNAs by rde-1 and/or ergo-1. The sequence is that of DEAD-box ATP-dependent RNA helicase rde-12 from Caenorhabditis elegans.